A 518-amino-acid chain; its full sequence is Cytochrome P450 monooxygenase pyr3 (518 aa).

The chain crosses the membrane as a helical span at residues 26 to 46 (GVAIVLFLAPLALHLVSSYLF). C458 serves as a coordination point for heme.

It belongs to the cytochrome P450 family. Heme is required as a cofactor.

The protein localises to the membrane. The protein operates within secondary metabolite biosynthesis; terpenoid biosynthesis. Cytochrome P450 monooxygenase; part of the gene cluster that mediates the biosynthesis of pyripyropene A, a specific human acyl-coenzyme A:cholesterol acyltransferase 2 inhibitor. The first step of the pathway is the synthesis of nicotinyl-CoA from nicotinic acid by the nicotinic acid-CoA ligase pyr1. Nicotinyl-CoA is then a substrate of polyketide synthase pyr2 to produce 4-hydroxy-6-(3-pyridinyl)-2H-pyran-2-one (HPPO) which is further prenylated by the polyprenyl transferase pyr6 to yield farnesyl-HPPO. The next steps consist of an epoxidation of farnesyl-HPPO to epoxyfarnesyl-HPPO by FAD-dependent monooxygenase pyr5 and a cyclization of the terpenoid portion by the terpene cyclase pyr4 to yield deacetyl-pyripyropene E. The 2 cytochrome P450 monooxygenases pyr3 and pyr9, and the 2 acetyltransferases pyr7 and pyr8 are involved in the conversion of deacetyl-pyripyropene E into pyripyropene A through several cycles of oxidation and acetylation steps. Pyr7 acetylates deacetyl-pyripyropene E to pyripyropene E which is oxidized to 11-deacetyl-pyripyropene O by pyr3, which is in turn acetylated into pyripyropene O by pyr8. Pyripyropene O is then oxidized to deacetyl-pyripyropene A by pyr9. Deacetyl-pyripyropene A is finally acetylated to pyripyropene A by pyr8. This chain is Cytochrome P450 monooxygenase pyr3, found in Aspergillus fumigatus (strain ATCC MYA-4609 / CBS 101355 / FGSC A1100 / Af293) (Neosartorya fumigata).